Consider the following 607-residue polypeptide: Elongation factor 4 (607 aa).

The tr-type G domain occupies 11–193; sequence ENIRNFSIIA…KIVEVVPAPD (183 aa). GTP contacts are provided by residues 23 to 28 and 140 to 143; these read DHGKST and NKID.

This sequence belongs to the TRAFAC class translation factor GTPase superfamily. Classic translation factor GTPase family. LepA subfamily.

It is found in the cell membrane. It carries out the reaction GTP + H2O = GDP + phosphate + H(+). Required for accurate and efficient protein synthesis under certain stress conditions. May act as a fidelity factor of the translation reaction, by catalyzing a one-codon backward translocation of tRNAs on improperly translocated ribosomes. Back-translocation proceeds from a post-translocation (POST) complex to a pre-translocation (PRE) complex, thus giving elongation factor G a second chance to translocate the tRNAs correctly. Binds to ribosomes in a GTP-dependent manner. The chain is Elongation factor 4 from Staphylococcus aureus (strain USA300).